We begin with the raw amino-acid sequence, 457 residues long: MTTDEGAKNNEESPTATVAEQGEDITSKKDRGVLKIVKRVGNGEETPMIGDKVYVHYKGKLSNGKKFDSSHDRNEPFVFSLGKGQVIKAWDIGVATMKKGEICHLLCKPEYAYGSAGSLPKIPSNATLFFEIELLDFKGEDLFEDGGIIRRTKRKGEGYSNPNEGATVEIHLEGRCGGRMFDCRDVAFTVGEGEDHDIPIGIDKALEKMQREEQCILYLGPRYGFGEAGKPKFGIEPNAELIYEVTLKSFEKAKESWEMDTKEKLEQAAIVKEKGTVYFKGGKYMQAVIQYGKIVSWLEMEYGLSEKESKASESFLLAAFLNLAMCYLKLREYTKAVECCDKALGLDSANEKGLYRRGEAQLLMNEFESAKGDFEKVLEVNPQNKAARLQISMCQKKAKEHNERDRRIYANMFKKFAEQDAKEEANKAMGKKTSEGVTNEKGTDSQAMEEEKPEGHV.

Met-1 bears the N-acetylmethionine mark. The segment covering 1-11 has biased composition (basic and acidic residues); that stretch reads MTTDEGAKNNE. The disordered stretch occupies residues 1 to 24; that stretch reads MTTDEGAKNNEESPTATVAEQGED. Ser-13 bears the Phosphoserine mark. Position 28 is an N6-acetyllysine (Lys-28). A PPIase FKBP-type 1 domain is found at 42–130; it reads NGEETPMIGD…KIPSNATLFF (89 aa). N6-acetyllysine is present on Lys-155. Positions 157-243 constitute a PPIase FKBP-type 2 domain; sequence EGYSNPNEGA…GIEPNAELIY (87 aa). 3 TPR repeats span residues 268 to 301, 317 to 350, and 351 to 384; these read AAIV…LEME, LAAF…DSAN, and EKGL…NPQN. Residues 420–457 are disordered; it reads DAKEEANKAMGKKTSEGVTNEKGTDSQAMEEEKPEGHV. Ser-445 carries the post-translational modification Phosphoserine.

Part of a heteromultimeric cytoplasmic complex with HSP90AA1, HSPA1A/HSPA1B and steroid receptors. Upon ligand binding dissociates from the complex and FKBP4 takes its place. Interacts with functionally mature heterooligomeric progesterone receptor complexes along with HSP90 and TEBP. Interacts with NR3C1. Interacts with Akt/AKT1 and PHLPP1; enhancing dephosphorylation and subsequent activation of Akt/AKT1. Interacts with IFI44L; this interaction modulates the kinase activity of IKBKB and IKBKE. Interacts with IKBKB and IKBKE. Post-translationally, acetylation impairs ability to promote interaction between Akt/AKT1 and PHLPP1. Deacetylation by SIRT7 promotes interaction between Akt/AKT1 and PHLPP1, leading to suppress Akt/AKT1 activation. In terms of processing, ubiquitinated, leading to degradation in a proteasome-dependent manner. Deubiquitinated by USP49, leading to stabilization. In terms of tissue distribution, widely expressed, enriched in testis compared to other tissues.

The protein localises to the cytoplasm. Its subcellular location is the nucleus. It catalyses the reaction [protein]-peptidylproline (omega=180) = [protein]-peptidylproline (omega=0). Inhibited by both FK506 and rapamycin. Its function is as follows. Immunophilin protein with PPIase and co-chaperone activities. Component of unligated steroid receptors heterocomplexes through interaction with heat-shock protein 90 (HSP90). Plays a role in the intracellular trafficking of heterooligomeric forms of steroid hormone receptors maintaining the complex into the cytoplasm when unliganded. Acts as a regulator of Akt/AKT1 activity by promoting the interaction between Akt/AKT1 and PHLPP1, thereby enhancing dephosphorylation and subsequent activation of Akt/AKT1. Interacts with IKBKE and IKBKB which facilitates IKK complex assembly leading to increased IKBKE and IKBKB kinase activity, NF-kappa-B activation, and IFN production. This chain is Peptidyl-prolyl cis-trans isomerase FKBP5 (FKBP5), found in Homo sapiens (Human).